A 424-amino-acid chain; its full sequence is Tol-Pal system protein TolB (424 aa).

A signal peptide spans methionine 1–alanine 24.

Belongs to the TolB family. In terms of assembly, the Tol-Pal system is composed of five core proteins: the inner membrane proteins TolA, TolQ and TolR, the periplasmic protein TolB and the outer membrane protein Pal. They form a network linking the inner and outer membranes and the peptidoglycan layer.

It localises to the periplasm. Its function is as follows. Part of the Tol-Pal system, which plays a role in outer membrane invagination during cell division and is important for maintaining outer membrane integrity. This is Tol-Pal system protein TolB from Methylococcus capsulatus (strain ATCC 33009 / NCIMB 11132 / Bath).